An 878-amino-acid polypeptide reads, in one-letter code: Phosphoenolpyruvate carboxylase (878 aa).

Active-site residues include histidine 138 and lysine 544.

The protein belongs to the PEPCase type 1 family. Requires Mg(2+) as cofactor.

The catalysed reaction is oxaloacetate + phosphate = phosphoenolpyruvate + hydrogencarbonate. Its function is as follows. Forms oxaloacetate, a four-carbon dicarboxylic acid source for the tricarboxylic acid cycle. The polypeptide is Phosphoenolpyruvate carboxylase (Psychromonas ingrahamii (strain DSM 17664 / CCUG 51855 / 37)).